The following is a 375-amino-acid chain: Putative fimbrium tip subunit Fim1C (375 aa).

The first 16 residues, 1–16 (MKLLANIFLSGLAILA), serve as a signal peptide directing secretion. Cys17 is lipidated: N-palmitoyl cysteine. The S-diacylglycerol cysteine moiety is linked to residue Cys17. A propeptide spanning residues 17–47 (CVSCSKDEDPVLPLEGAKLSVAVKASGTATK) is cleaved from the precursor.

The protein belongs to the bacteroidetes fimbrillin superfamily. FimA/Mfa1 family. May be part of the fimbrial tip.

Its subcellular location is the fimbrium. It localises to the cell outer membrane. In terms of biological role, probably a component of the fimbrium tip. Fimbriae are filamentous appendages on the cell surface that mediate cell adhesion and biofilm formation. This is Putative fimbrium tip subunit Fim1C from Parabacteroides distasonis (strain ATCC 8503 / DSM 20701 / CIP 104284 / JCM 5825 / NCTC 11152).